The chain runs to 96 residues: Dynein light chain roadblock-type 1 (96 aa).

N-acetylalanine is present on A2.

Belongs to the GAMAD family. In terms of assembly, homodimer. The cytoplasmic dynein 1 complex consists of two catalytic heavy chains (HCs) and a number of non-catalytic subunits presented by intermediate chains (ICs), light intermediate chains (LICs) and light chains (LCs); the composition seems to vary in respect to the IC, LIC and LC composition. The heavy chain homodimer serves as a scaffold for the probable homodimeric assembly of the respective non-catalytic subunits. The ICs and LICs bind directly to the HC dimer and the LCs assemble on the IC dimer. Interacts with DYNLRB2. Interacts with DYNC1I1 and DYNC1I2. Interacts with RAB6A isoform 1 (GTP-bound); the interaction is direct. Interacts with RAB6A isoform 2 (GDP-bound); the interaction is direct. Interacts with RAB6B (GDP-bound). In terms of tissue distribution, high expression in heart, liver, brain and pancreas; moderate in placenta, skeletal muscle and kidney; low in lung, prostate, testis, small intestine and colon. Isoform 1 expression is up-regulated in 64% hepatocellular carcinoma (HCC) patients.

It is found in the cytoplasm. The protein localises to the cytoskeleton. Its function is as follows. Acts as one of several non-catalytic accessory components of the cytoplasmic dynein 1 complex that are thought to be involved in linking dynein to cargos and to adapter proteins that regulate dynein function. Cytoplasmic dynein 1 acts as a motor for the intracellular retrograde motility of vesicles and organelles along microtubules. The protein is Dynein light chain roadblock-type 1 of Homo sapiens (Human).